The chain runs to 62 residues: DNA-directed RNA polymerase subunit Rpo10 (62 aa).

Cys-6, Cys-9, Cys-43, and Cys-44 together coordinate Zn(2+).

Belongs to the archaeal Rpo10/eukaryotic RPB10 RNA polymerase subunit family. Part of the RNA polymerase complex. Zn(2+) is required as a cofactor.

It localises to the cytoplasm. It catalyses the reaction RNA(n) + a ribonucleoside 5'-triphosphate = RNA(n+1) + diphosphate. Its function is as follows. DNA-dependent RNA polymerase (RNAP) catalyzes the transcription of DNA into RNA using the four ribonucleoside triphosphates as substrates. In Methanoregula boonei (strain DSM 21154 / JCM 14090 / 6A8), this protein is DNA-directed RNA polymerase subunit Rpo10.